The following is a 2039-amino-acid chain: Calcium-channel protein CCH1 (2039 aa).

2 disordered regions span residues 1–171 (MQGR…PPRS) and 206–288 (PQLK…PQKE). Residues 64–80 (STEEKKGDEYNGNDKDS) are compositionally biased toward basic and acidic residues. An N-linked (GlcNAc...) asparagine glycan is attached at Asn-98. Low complexity-rich tracts occupy residues 122 to 132 (SPSTKSAKSSS) and 147 to 164 (FSSY…SPSS). Residues 209–226 (KSEKSRPVSDVGEDRGEG) show a composition bias toward basic and acidic residues. N-linked (GlcNAc...) asparagine glycosylation is found at Asn-257 and Asn-269. Basic residues predominate over residues 271 to 281 (SRKKPSPKFFH). Phosphoserine is present on Ser-284. A helical transmembrane segment spans residues 346-366 (YSLLYNTLLTFYAILLAIRTY). The N-linked (GlcNAc...) asparagine glycan is linked to Asn-379. A helical transmembrane segment spans residues 384-404 (FIFILSACFTGNDIAKIIAFG). Asn-559 carries an N-linked (GlcNAc...) asparagine glycan. Helical transmembrane passes span 563 to 583 (MLVY…QGSF), 658 to 678 (IVNS…TDLM), and 691 to 711 (LFFI…LIAV). Asn-754 and Asn-760 each carry an N-linked (GlcNAc...) asparagine glycan. The next 3 helical transmembrane spans lie at 766 to 786 (LAIY…DIGM), 809 to 829 (ISIV…PNMW), and 841 to 861 (FIIS…VLGH). Asn-882 and Asn-900 each carry an N-linked (GlcNAc...) asparagine glycan. 2 helical membrane-spanning segments follow: residues 904 to 924 (FYFF…EGVI) and 942 to 962 (SFLS…LYAL). N-linked (GlcNAc...) asparagine glycosylation occurs at Asn-968. The chain crosses the membrane as a helical span at residues 978–998 (FFIIWFLLSNSVILNIFIALI). Asn-1153 is a glycosylation site (N-linked (GlcNAc...) asparagine). The helical transmembrane segment at 1207-1227 (VFVFIFALATILLIVCSCYVT) threads the bilayer. Residue Asn-1240 is glycosylated (N-linked (GlcNAc...) asparagine). 2 consecutive transmembrane segments (helical) span residues 1247 to 1267 (CAFI…DGFI) and 1277 to 1297 (PWNF…IAYL). Asn-1302 carries an N-linked (GlcNAc...) asparagine glycan. Transmembrane regions (helical) follow at residues 1340–1360 (IFEA…WGLS) and 1408–1428 (FASA…VDLL). Asn-1433 carries an N-linked (GlcNAc...) asparagine glycan. Transmembrane regions (helical) follow at residues 1452-1472 (FLVL…VSFI), 1529-1549 (NFYY…MLLS), 1554-1574 (PGNL…VFLI), 1596-1616 (IRLS…HVPA), and 1618-1638 (HYWF…FIIP). The N-linked (GlcNAc...) asparagine glycan is linked to Asn-1640. Residues 1654 to 1674 (LPPILSLTYTWGVLFLVYAIA) traverse the membrane as a helical segment. 2 N-linked (GlcNAc...) asparagine glycosylation sites follow: Asn-1687 and Asn-1732. The chain crosses the membrane as a helical span at residues 1748-1768 (LMSWNIISMYIFVNMFVSLII). N-linked (GlcNAc...) asparagine glycosylation is found at Asn-1770 and Asn-1785. The EF-hand domain maps to 1787 to 1822 (SEIKKYIEAWSKFDTDGTGELELSYLPRIMHSFDGP). Residues 2011 to 2039 (PRMNQDSTMEPPEEPIDNNDDSANDLIDR) are disordered. The segment covering 2021–2033 (PPEEPIDNNDDSA) has biased composition (acidic residues).

The protein belongs to the calcium channel alpha-1 subunit (TC 1.A.1.11) family. Interacts with MID1 to form a Ca(2+) influx channel.

The protein localises to the cell membrane. Voltage-gated, high-affinity calcium channel that functions together with MID1 to mediate calcium entry into cells. Required during conditions of environmental stress. The chain is Calcium-channel protein CCH1 (CCH1) from Saccharomyces cerevisiae (strain ATCC 204508 / S288c) (Baker's yeast).